A 347-amino-acid polypeptide reads, in one-letter code: UDP-3-O-acylglucosamine N-acyltransferase 1 (347 aa).

The active-site Proton acceptor is histidine 246.

Belongs to the transferase hexapeptide repeat family. LpxD subfamily. Homotrimer.

It catalyses the reaction a UDP-3-O-[(3R)-3-hydroxyacyl]-alpha-D-glucosamine + a (3R)-hydroxyacyl-[ACP] = a UDP-2-N,3-O-bis[(3R)-3-hydroxyacyl]-alpha-D-glucosamine + holo-[ACP] + H(+). It functions in the pathway bacterial outer membrane biogenesis; LPS lipid A biosynthesis. In terms of biological role, catalyzes the N-acylation of UDP-3-O-acylglucosamine using 3-hydroxyacyl-ACP as the acyl donor. Is involved in the biosynthesis of lipid A, a phosphorylated glycolipid that anchors the lipopolysaccharide to the outer membrane of the cell. In Francisella tularensis subsp. tularensis (strain SCHU S4 / Schu 4), this protein is UDP-3-O-acylglucosamine N-acyltransferase 1.